A 1300-amino-acid chain; its full sequence is Zinc finger protein 536 (1300 aa).

Disordered stretches follow at residues methionine 1–leucine 26 and phenylalanine 47–methionine 77. Residues proline 48–histidine 69 are compositionally biased toward basic and acidic residues. C2H2-type zinc fingers lie at residues tyrosine 130–histidine 152, phenylalanine 158–histidine 180, phenylalanine 274–histidine 297, tyrosine 300–histidine 323, phenylalanine 345–histidine 367, and histidine 373–histidine 395. Disordered stretches follow at residues histidine 584–serine 604 and serine 650–alanine 739. Basic and acidic residues predominate over residues leucine 594–serine 604. The segment at threonine 631 to histidine 653 adopts a C2H2-type 7 zinc-finger fold. Positions arginine 657 to serine 674 are enriched in basic and acidic residues. Residues glycine 675–glutamate 696 are compositionally biased toward polar residues. 2 consecutive C2H2-type zinc fingers follow at residues lysine 751–histidine 773 and tyrosine 779–histidine 801. The tract at residues histidine 802 to serine 826 is disordered. A phosphoserine mark is found at serine 826 and serine 827. Positions serine 856–valine 880 are enriched in polar residues. 3 disordered regions span residues serine 856–lysine 893, lysine 937–alanine 985, and serine 1124–lysine 1260. Composition is skewed to basic and acidic residues over residues histidine 950 to glutamine 972 and lysine 1133 to glutamate 1143. 2 stretches are compositionally biased toward acidic residues: residues aspartate 1160–methionine 1170 and asparagine 1178–proline 1187. The span at leucine 1194–leucine 1209 shows a compositional bias: low complexity.

It belongs to the krueppel C2H2-type zinc-finger protein family.

Its subcellular location is the nucleus. Functionally, transcriptional repressor that negatively regulates neuron differentiation by repressing retinoic acid-induced gene transcription. Binds and interrupts RARA from binding to retinoic acid response elements (RARE) composed of tandem 5'-AGGTCA-3' sites known as DR1-DR5. Recognizes and binds 2 copies of the core DNA sequence 5'-CCCCCA-3'. The chain is Zinc finger protein 536 (ZNF536) from Homo sapiens (Human).